A 386-amino-acid polypeptide reads, in one-letter code: Decapping nuclease RAI1 (386 aa).

Residue R34 participates in substrate binding. A divalent metal cation is bound at residue E159. Residue E205 participates in substrate binding. A divalent metal cation-binding residues include D207, E225, and L226. The substrate site is built by K227 and Q251.

The protein belongs to the DXO/Dom3Z family. Interacts with RAT1; the interaction is direct, stabilizes RAT1 protein structure and stimulates its exoribonuclease activity. The interaction also stimulates RAI1 pyrophosphohydrolase activity, probably by recruiting it to mRNA substrates. The cofactor is a divalent metal cation.

It localises to the nucleus. It carries out the reaction a 5'-end NAD(+)-phospho-ribonucleoside in mRNA + H2O = a 5'-end phospho-ribonucleoside in mRNA + NAD(+) + H(+). The catalysed reaction is a 5'-end (N(7)-methyl 5'-triphosphoguanosine)-ribonucleoside-ribonucleotide in mRNA + H2O = a (N(7)-methyl 5'-triphosphoguanosine)-nucleoside + a 5'-end phospho-ribonucleoside in mRNA + H(+). The enzyme catalyses a 5'-end triphospho-ribonucleoside in mRNA + H2O = a 5'-end phospho-ribonucleoside in mRNA + diphosphate + H(+). Functionally, decapping enzyme for NAD-capped RNAs: specifically hydrolyzes the nicotinamide adenine dinucleotide (NAD) cap from a subset of RNAs by removing the entire NAD moiety from the 5'-end of an NAD-capped RNA. The NAD-cap is present at the 5'-end of some RNAs and snoRNAs. In contrast to the canonical 5'-end N7 methylguanosine (m7G) cap, the NAD cap promotes mRNA decay. Also acts as a non-canonical decapping enzyme that removes the entire cap structure of m7G capped or incompletely capped RNAs. Has decapping activity toward incomplete 5'-end m7G cap mRNAs such as unmethylated 5'-end-capped RNA (cap0), while it has no activity toward 2'-O-ribose methylated m7G cap (cap1). Also possesses RNA 5'-pyrophosphohydrolase activity by hydrolyzing the 5'-end triphosphate to release pyrophosphates. Stimulates exoribonuclease activity of Rat1, allowing it to degrade RNAs with stable secondary structure more effectively. This Cryptococcus neoformans var. neoformans serotype D (strain B-3501A) (Filobasidiella neoformans) protein is Decapping nuclease RAI1 (RAI1).